Here is a 1110-residue protein sequence, read N- to C-terminus: Coiled-coil domain-containing protein 150 (1110 aa).

Coiled-coil stretches lie at residues Leu-122 to Ser-250, Gln-288 to Asn-313, Ala-413 to Asn-695, and Ser-728 to Arg-1048.

This Mus musculus (Mouse) protein is Coiled-coil domain-containing protein 150 (Ccdc150).